Consider the following 156-residue polypeptide: ATP synthase subunit b (156 aa).

A helical membrane pass occupies residues 7-29; that stretch reads LFGQTIAFAIFVWFCMKFVWPPL.

Belongs to the ATPase B chain family. In terms of assembly, F-type ATPases have 2 components, F(1) - the catalytic core - and F(0) - the membrane proton channel. F(1) has five subunits: alpha(3), beta(3), gamma(1), delta(1), epsilon(1). F(0) has three main subunits: a(1), b(2) and c(10-14). The alpha and beta chains form an alternating ring which encloses part of the gamma chain. F(1) is attached to F(0) by a central stalk formed by the gamma and epsilon chains, while a peripheral stalk is formed by the delta and b chains.

Its subcellular location is the cell inner membrane. F(1)F(0) ATP synthase produces ATP from ADP in the presence of a proton or sodium gradient. F-type ATPases consist of two structural domains, F(1) containing the extramembraneous catalytic core and F(0) containing the membrane proton channel, linked together by a central stalk and a peripheral stalk. During catalysis, ATP synthesis in the catalytic domain of F(1) is coupled via a rotary mechanism of the central stalk subunits to proton translocation. In terms of biological role, component of the F(0) channel, it forms part of the peripheral stalk, linking F(1) to F(0). In Ectopseudomonas mendocina (strain ymp) (Pseudomonas mendocina), this protein is ATP synthase subunit b.